The sequence spans 356 residues: Protein RecA (356 aa).

Residue 71–78 (GPESSGKT) coordinates ATP.

The protein belongs to the RecA family.

The protein localises to the cytoplasm. Functionally, can catalyze the hydrolysis of ATP in the presence of single-stranded DNA, the ATP-dependent uptake of single-stranded DNA by duplex DNA, and the ATP-dependent hybridization of homologous single-stranded DNAs. It interacts with LexA causing its activation and leading to its autocatalytic cleavage. The sequence is that of Protein RecA from Synechococcus elongatus (strain ATCC 33912 / PCC 7942 / FACHB-805) (Anacystis nidulans R2).